Here is a 560-residue protein sequence, read N- to C-terminus: Glutamine--tRNA ligase (560 aa).

The 'HIGH' region motif lies at 36-46 (PEPNGFAHIGH). ATP contacts are provided by residues 37–39 (EPN) and 43–49 (HIGHAKA). L-glutamine-binding residues include Asp69 and Tyr214. 263-264 (RL) is a binding site for ATP. The 'KMSKS' region signature appears at 270–274 (LTSKR).

This sequence belongs to the class-I aminoacyl-tRNA synthetase family. As to quaternary structure, monomer.

It is found in the cytoplasm. It carries out the reaction tRNA(Gln) + L-glutamine + ATP = L-glutaminyl-tRNA(Gln) + AMP + diphosphate. This chain is Glutamine--tRNA ligase, found in Chromobacterium violaceum (strain ATCC 12472 / DSM 30191 / JCM 1249 / CCUG 213 / NBRC 12614 / NCIMB 9131 / NCTC 9757 / MK).